Here is a 423-residue protein sequence, read N- to C-terminus: tRNA(Ile)-lysidine synthase (423 aa).

29 to 34 (SGGKDS) is a binding site for ATP.

It belongs to the tRNA(Ile)-lysidine synthase family.

Its subcellular location is the cytoplasm. It catalyses the reaction cytidine(34) in tRNA(Ile2) + L-lysine + ATP = lysidine(34) in tRNA(Ile2) + AMP + diphosphate + H(+). Ligates lysine onto the cytidine present at position 34 of the AUA codon-specific tRNA(Ile) that contains the anticodon CAU, in an ATP-dependent manner. Cytidine is converted to lysidine, thus changing the amino acid specificity of the tRNA from methionine to isoleucine. The protein is tRNA(Ile)-lysidine synthase of Lactococcus lactis subsp. lactis (strain IL1403) (Streptococcus lactis).